A 262-amino-acid polypeptide reads, in one-letter code: Intron-encoded DNA endonuclease ai2b (262 aa).

Belongs to the LAGLIDADG endonuclease family.

It is found in the mitochondrion. Mitochondrial DNA endonuclease involved in intron homing. The polypeptide is Intron-encoded DNA endonuclease ai2b (ai2b) (Dictyostelium discoideum (Social amoeba)).